Consider the following 206-residue polypeptide: Holliday junction branch migration complex subunit RuvA (206 aa).

Positions 1–64 are domain I; it reads MIAKLTGLLD…EDNIQLFGFA (64 aa). The domain II stretch occupies residues 65-143; sequence DTEERDWFRL…SFGAPAPAAA (79 aa). A flexible linker region spans residues 144 to 154; that stretch reads TAGKGGAAPAG. Positions 154–206 are domain III; it reads GPAGAVADAVSALVNLGYRRVEAFTAVNAVAQRLGPEAGVSDLIRAGLKELSP.

This sequence belongs to the RuvA family. In terms of assembly, homotetramer. Forms an RuvA(8)-RuvB(12)-Holliday junction (HJ) complex. HJ DNA is sandwiched between 2 RuvA tetramers; dsDNA enters through RuvA and exits via RuvB. An RuvB hexamer assembles on each DNA strand where it exits the tetramer. Each RuvB hexamer is contacted by two RuvA subunits (via domain III) on 2 adjacent RuvB subunits; this complex drives branch migration. In the full resolvosome a probable DNA-RuvA(4)-RuvB(12)-RuvC(2) complex forms which resolves the HJ.

The protein resides in the cytoplasm. In terms of biological role, the RuvA-RuvB-RuvC complex processes Holliday junction (HJ) DNA during genetic recombination and DNA repair, while the RuvA-RuvB complex plays an important role in the rescue of blocked DNA replication forks via replication fork reversal (RFR). RuvA specifically binds to HJ cruciform DNA, conferring on it an open structure. The RuvB hexamer acts as an ATP-dependent pump, pulling dsDNA into and through the RuvAB complex. HJ branch migration allows RuvC to scan DNA until it finds its consensus sequence, where it cleaves and resolves the cruciform DNA. The sequence is that of Holliday junction branch migration complex subunit RuvA from Rhodospirillum centenum (strain ATCC 51521 / SW).